The primary structure comprises 86 residues: Translation machinery-associated protein 10 (86 aa).

Residues S28 and S79 each carry the phosphoserine modification. Residues N63 to I86 form a disordered region.

This sequence belongs to the STF2 family. As to quaternary structure, associates with ribosomes.

It is found in the cytoplasm. The protein localises to the nucleus. Its function is as follows. May be involved in inhibition of the reverse ATPase reaction of mitochondrial F(1)F(0)-type ATP synthase. The polypeptide is Translation machinery-associated protein 10 (Saccharomyces cerevisiae (strain ATCC 204508 / S288c) (Baker's yeast)).